Consider the following 210-residue polypeptide: Thiamine-phosphate synthase (210 aa).

Residues Gln-38–Lys-42 and Asn-70 each bind 4-amino-2-methyl-5-(diphosphooxymethyl)pyrimidine. 2 residues coordinate Mg(2+): Asp-71 and Asp-90. Position 109 (Ser-109) interacts with 4-amino-2-methyl-5-(diphosphooxymethyl)pyrimidine. Thr-139–Thr-141 serves as a coordination point for 2-[(2R,5Z)-2-carboxy-4-methylthiazol-5(2H)-ylidene]ethyl phosphate. Lys-142 is a 4-amino-2-methyl-5-(diphosphooxymethyl)pyrimidine binding site. 2-[(2R,5Z)-2-carboxy-4-methylthiazol-5(2H)-ylidene]ethyl phosphate contacts are provided by residues Gly-170 and Val-190 to Ser-191.

This sequence belongs to the thiamine-phosphate synthase family. Requires Mg(2+) as cofactor.

It carries out the reaction 2-[(2R,5Z)-2-carboxy-4-methylthiazol-5(2H)-ylidene]ethyl phosphate + 4-amino-2-methyl-5-(diphosphooxymethyl)pyrimidine + 2 H(+) = thiamine phosphate + CO2 + diphosphate. It catalyses the reaction 2-(2-carboxy-4-methylthiazol-5-yl)ethyl phosphate + 4-amino-2-methyl-5-(diphosphooxymethyl)pyrimidine + 2 H(+) = thiamine phosphate + CO2 + diphosphate. The catalysed reaction is 4-methyl-5-(2-phosphooxyethyl)-thiazole + 4-amino-2-methyl-5-(diphosphooxymethyl)pyrimidine + H(+) = thiamine phosphate + diphosphate. The protein operates within cofactor biosynthesis; thiamine diphosphate biosynthesis; thiamine phosphate from 4-amino-2-methyl-5-diphosphomethylpyrimidine and 4-methyl-5-(2-phosphoethyl)-thiazole: step 1/1. Functionally, condenses 4-methyl-5-(beta-hydroxyethyl)thiazole monophosphate (THZ-P) and 2-methyl-4-amino-5-hydroxymethyl pyrimidine pyrophosphate (HMP-PP) to form thiamine monophosphate (TMP). The protein is Thiamine-phosphate synthase of Leptospira biflexa serovar Patoc (strain Patoc 1 / Ames).